Reading from the N-terminus, the 91-residue chain is Envelope glycoprotein N (91 aa).

Positions 1-23 (MGPPRRVCRAGLLFVLLVALAAG) are cleaved as a signal peptide. Residues 23–48 (GDAGPRGEPPGEEGGRDGIGGARCET) form a disordered region. Over 24 to 55 (DAGPRGEPPGEEGGRDGIGGARCETQNTGQMS) the chain is Virion surface. Residues 56–76 (APGALVPFYVGMASMGVCIIA) form a helical membrane-spanning segment. Residues 77–91 (HVCQICQRLLAAGHA) are Intravirion-facing.

This sequence belongs to the herpesviridae glycoprotein N family. Interacts (via N-terminus) with gM (via N-terminus). The gM-gN heterodimer forms the gCII complex.

It localises to the virion membrane. The protein localises to the host membrane. It is found in the host Golgi apparatus. Its subcellular location is the host trans-Golgi network. Its function is as follows. Envelope glycoprotein necessary for proper maturation of gM and modulation of its membrane fusion activity. Also plays a critical role in virion morphogenesis. The chain is Envelope glycoprotein N from Homo sapiens (Human).